Reading from the N-terminus, the 508-residue chain is Carboxypeptidase Y homolog ARB_05721 (508 aa).

Positions Met-1–Ala-25 are cleaved as a signal peptide. N-linked (GlcNAc...) asparagine glycosylation is found at Asn-132 and Asn-169. The active site involves Ser-204. The N-linked (GlcNAc...) asparagine glycan is linked to Asn-268. 3 disulfides stabilise this stretch: Cys-282/Cys-305, Cys-289/Cys-298, and Cys-332/Cys-338. Asp-410 is a catalytic residue. Substrate is bound at residue Cys-413. Asn-451 carries N-linked (GlcNAc...) asparagine glycosylation. The active site involves His-484. Met-485 is a binding site for substrate.

This sequence belongs to the peptidase S10 family.

Its subcellular location is the secreted. It carries out the reaction Release of a C-terminal amino acid with broad specificity.. Its function is as follows. Involved in degradation of small peptides. The chain is Carboxypeptidase Y homolog ARB_05721 from Arthroderma benhamiae (strain ATCC MYA-4681 / CBS 112371) (Trichophyton mentagrophytes).